A 347-amino-acid polypeptide reads, in one-letter code: Selenide, water dikinase (347 aa).

The active site involves Cys-17. ATP contacts are provided by residues Lys-20 and 48-50; that span reads TRD. Asp-51 lines the Mg(2+) pocket. Residues Asp-68, Asp-91, and 139–141 contribute to the ATP site; that span reads GHS. Residue Asp-91 participates in Mg(2+) binding. Asp-227 contacts Mg(2+).

It belongs to the selenophosphate synthase 1 family. Class I subfamily. Homodimer. Mg(2+) serves as cofactor.

The enzyme catalyses hydrogenselenide + ATP + H2O = selenophosphate + AMP + phosphate + 2 H(+). Functionally, synthesizes selenophosphate from selenide and ATP. The protein is Selenide, water dikinase of Escherichia coli O9:H4 (strain HS).